An 87-amino-acid polypeptide reads, in one-letter code: Small ribosomal subunit protein eS21 (87 aa).

This sequence belongs to the eukaryotic ribosomal protein eS21 family. In terms of assembly, component of the small ribosomal subunit. Mature ribosomes consist of a small (40S) and a large (60S) subunit. The 40S subunit contains about 33 different proteins and 1 molecule of RNA (18S). The 60S subunit contains about 49 different proteins and 3 molecules of RNA (25S, 5.8S and 5S).

It localises to the cytoplasm. Required for the processing of the 20S rRNA-precursor to mature 18S rRNA in a late step of the maturation of 40S ribosomal subunits. Has a physiological role leading to 18S rRNA stability. This is Small ribosomal subunit protein eS21 (RPS21) from Candida glabrata (strain ATCC 2001 / BCRC 20586 / JCM 3761 / NBRC 0622 / NRRL Y-65 / CBS 138) (Yeast).